The following is a 190-amino-acid chain: Large ribosomal subunit protein bL9 (190 aa).

The protein belongs to the bacterial ribosomal protein bL9 family.

In terms of biological role, binds to the 23S rRNA. This is Large ribosomal subunit protein bL9 from Methylobacterium radiotolerans (strain ATCC 27329 / DSM 1819 / JCM 2831 / NBRC 15690 / NCIMB 10815 / 0-1).